Here is a 99-residue protein sequence, read N- to C-terminus: Putative septation protein SpoVG (99 aa).

This sequence belongs to the SpoVG family.

In terms of biological role, could be involved in septation. In Aster yellows witches'-broom phytoplasma (strain AYWB), this protein is Putative septation protein SpoVG.